A 420-amino-acid polypeptide reads, in one-letter code: CinA-like protein (420 aa).

It belongs to the CinA family.

In Syntrophus aciditrophicus (strain SB), this protein is CinA-like protein.